Reading from the N-terminus, the 381-residue chain is L-lactate dehydrogenase (381 aa).

Positions 1 to 380 constitute an FMN hydroxy acid dehydrogenase domain; sequence MIISASTDYR…TRDSLVRELG (380 aa). Position 24 (Y24) interacts with substrate. The FMN site is built by S106 and Q127. Residue Y129 coordinates substrate. T155 contacts FMN. Residue R164 coordinates substrate. K251 lines the FMN pocket. Residue H275 is the Proton acceptor of the active site. R278 contributes to the substrate binding site. 306-330 is a binding site for FMN; the sequence is DSGIRSGLDVVRMIALGADTVLIGR.

This sequence belongs to the FMN-dependent alpha-hydroxy acid dehydrogenase family. Homotetramer. FMN is required as a cofactor.

The protein resides in the cell inner membrane. The enzyme catalyses (S)-lactate + A = pyruvate + AH2. Functionally, catalyzes the conversion of L-lactate to pyruvate. Is coupled to the respiratory chain. In Pseudomonas putida (strain GB-1), this protein is L-lactate dehydrogenase.